The chain runs to 402 residues: Tryptophan synthase beta chain (402 aa).

Position 91 is an N6-(pyridoxal phosphate)lysine (Lys-91).

Belongs to the TrpB family. In terms of assembly, tetramer of two alpha and two beta chains. Requires pyridoxal 5'-phosphate as cofactor.

It catalyses the reaction (1S,2R)-1-C-(indol-3-yl)glycerol 3-phosphate + L-serine = D-glyceraldehyde 3-phosphate + L-tryptophan + H2O. The protein operates within amino-acid biosynthesis; L-tryptophan biosynthesis; L-tryptophan from chorismate: step 5/5. Functionally, the beta subunit is responsible for the synthesis of L-tryptophan from indole and L-serine. The chain is Tryptophan synthase beta chain from Streptococcus thermophilus (strain CNRZ 1066).